The chain runs to 243 residues: Probable transcriptional regulatory protein BH0025 (243 aa).

The protein belongs to the TACO1 family.

Its subcellular location is the cytoplasm. This Borrelia hermsii (strain HS1 / DAH) protein is Probable transcriptional regulatory protein BH0025.